The chain runs to 442 residues: Protein translocase subunit SecY (442 aa).

10 consecutive transmembrane segments (helical) span residues 29 to 49 (LITI…VPDI), 69 to 89 (IFTG…LPYI), 126 to 146 (YIAF…LLRP), 153 to 173 (PLFI…VMWI), 182 to 202 (IGNG…PQTL), 217 to 237 (ITAV…IVFV), 274 to 294 (VMPI…AGFA), 320 to 340 (VYTV…ASLI), 377 to 397 (LTFL…FVEQ), and 400 to 420 (GVTT…GVAI).

The protein belongs to the SecY/SEC61-alpha family. Component of the Sec protein translocase complex. Heterotrimer consisting of SecY, SecE and SecG subunits. The heterotrimers can form oligomers, although 1 heterotrimer is thought to be able to translocate proteins. Interacts with the ribosome. Interacts with SecDF, and other proteins may be involved. Interacts with SecA.

The protein resides in the cell inner membrane. It is found in the cellular thylakoid membrane. In terms of biological role, the central subunit of the protein translocation channel SecYEG. Consists of two halves formed by TMs 1-5 and 6-10. These two domains form a lateral gate at the front which open onto the bilayer between TMs 2 and 7, and are clamped together by SecE at the back. The channel is closed by both a pore ring composed of hydrophobic SecY resides and a short helix (helix 2A) on the extracellular side of the membrane which forms a plug. The plug probably moves laterally to allow the channel to open. The ring and the pore may move independently. The chain is Protein translocase subunit SecY from Synechocystis sp. (strain ATCC 27184 / PCC 6803 / Kazusa).